The primary structure comprises 283 residues: Para-Rep C10 (283 aa).

Residues 3 to 96 (SIRAIHWCFT…IDGPWEYGTW (94 aa)) enclose the CRESS-DNA virus Rep endonuclease domain. The RCR-1 motif lies at 10-13 (CFTL). A divalent metal cation-binding residues include Glu36 and His42. Positions 42 to 44 (HLQ) match the RCR-2 motif. Residues 51–71 (KQTTLKKMKELLPGAHLEMAR) carry the Nuclear localization signal motif. Catalysis depends on Tyr79, which acts as the For DNA cleavage activity. The short motif at 79–82 (YCQK) is the RCR-3 element. Glu84 is a binding site for a divalent metal cation. The Nuclear localization signal signature appears at 96 to 102 (WISTGSH). 172-180 (GPHGGEGKS) is a binding site for ATP.

It belongs to the nanoviridea/circoviridae replication-associated protein family. Homooligomer (Potential). Rep binds to repeated DNA motifs (iterons). Mg(2+) is required as a cofactor. Mn(2+) serves as cofactor.

The protein resides in the host nucleus. It catalyses the reaction ATP + H2O = ADP + phosphate + H(+). Initiates and terminates the replication only of its own subviral DNA molecule. The closed circular ssDNA genome is first converted to a superhelical dsDNA. Rep binds a specific hairpin at the genome origin of replication. Introduces an endonucleolytic nick within the intergenic region of the genome, thereby initiating the rolling circle replication (RCR). Following cleavage, binds covalently to the 5'-phosphate of DNA as a tyrosyl ester. The cleavage gives rise to a free 3'-OH that serves as a primer for the cellular DNA polymerase. The polymerase synthesizes the (+) strand DNA by rolling circle mechanism. After one round of replication, a Rep-catalyzed nucleotidyl transfer reaction releases a circular single-stranded virus genome, thereby terminating the replication. Displays origin-specific DNA cleavage, nucleotidyl transferase, ATPase and helicase activities. In Milk vetch dwarf C10 alphasatellite (MVDC10A), this protein is Para-Rep C10 (C10).